Consider the following 256-residue polypeptide: NAD-dependent protein deacylase 2 (256 aa).

The Deacetylase sirtuin-type domain maps to 1 to 256 (MDSHSPIATV…MPQVVSHIYR (256 aa)). NAD(+)-binding positions include 25–44 (GAGL…GGLY) and 108–111 (QNID). The active-site Proton acceptor is His128. Zn(2+) is bound by residues Cys136, Cys139, Cys158, and Cys161. NAD(+) contacts are provided by residues 199–201 (GTT), 225–227 (NPG), and Ala243.

It belongs to the sirtuin family. Class III subfamily. Zn(2+) is required as a cofactor.

The protein resides in the cytoplasm. It catalyses the reaction N(6)-acetyl-L-lysyl-[protein] + NAD(+) + H2O = 2''-O-acetyl-ADP-D-ribose + nicotinamide + L-lysyl-[protein]. Its function is as follows. NAD-dependent protein deacetylase which modulates the activities of several proteins which are inactive in their acetylated form. This is NAD-dependent protein deacylase 2 (cobB2) from Pseudomonas aeruginosa (strain ATCC 15692 / DSM 22644 / CIP 104116 / JCM 14847 / LMG 12228 / 1C / PRS 101 / PAO1).